Consider the following 21-residue polypeptide: Maculatin-1.1 (21 aa).

A Phenylalanine amide modification is found at Phe-21.

As to expression, expressed by the skin dorsal glands.

The protein localises to the secreted. Maculatin-1.1 shows significant antibacterial activity against Gram-positive bacteria, less against Gram-negative bacteria. Maculatin-1.1.1 is inactive. The polypeptide is Maculatin-1.1 (Ranoidea genimaculata (Brown-spotted tree frog)).